The sequence spans 35 residues: MEALVYTFLLVSTLGIIFFAIFFREPPXILTKKTK.

The helical transmembrane segment at 3–23 (ALVYTFLLVSTLGIIFFAIFF) threads the bilayer.

This sequence belongs to the PsbT family. As to quaternary structure, PSII is composed of 1 copy each of membrane proteins PsbA, PsbB, PsbC, PsbD, PsbE, PsbF, PsbH, PsbI, PsbJ, PsbK, PsbL, PsbM, PsbT, PsbY, PsbZ, Psb30/Ycf12, at least 3 peripheral proteins of the oxygen-evolving complex and a large number of cofactors. It forms dimeric complexes.

It localises to the plastid. The protein localises to the chloroplast thylakoid membrane. Functionally, found at the monomer-monomer interface of the photosystem II (PS II) dimer, plays a role in assembly and dimerization of PSII. PSII is a light-driven water plastoquinone oxidoreductase, using light energy to abstract electrons from H(2)O, generating a proton gradient subsequently used for ATP formation. The sequence is that of Photosystem II reaction center protein T from Asarum canadense (Wild ginger).